The sequence spans 288 residues: Elongation factor Ts (288 aa).

An involved in Mg(2+) ion dislocation from EF-Tu region spans residues 79 to 82 (TDFV).

It belongs to the EF-Ts family.

It is found in the cytoplasm. Associates with the EF-Tu.GDP complex and induces the exchange of GDP to GTP. It remains bound to the aminoacyl-tRNA.EF-Tu.GTP complex up to the GTP hydrolysis stage on the ribosome. In Ehrlichia chaffeensis (strain ATCC CRL-10679 / Arkansas), this protein is Elongation factor Ts.